A 226-amino-acid chain; its full sequence is Urease accessory protein UreF (226 aa).

Belongs to the UreF family. UreD, UreF and UreG form a complex that acts as a GTP-hydrolysis-dependent molecular chaperone, activating the urease apoprotein by helping to assemble the nickel containing metallocenter of UreC. The UreE protein probably delivers the nickel.

The protein resides in the cytoplasm. In terms of biological role, required for maturation of urease via the functional incorporation of the urease nickel metallocenter. This Burkholderia lata (strain ATCC 17760 / DSM 23089 / LMG 22485 / NCIMB 9086 / R18194 / 383) protein is Urease accessory protein UreF.